The sequence spans 265 residues: Vegetative storage protein 2 (265 aa).

Residues 1 to 18 (MKILSLSLLLLLAATVSA) form the signal peptide. 3 N-linked (GlcNAc...) asparagine glycosylation sites follow: asparagine 110, asparagine 188, and asparagine 210.

This sequence belongs to the APS1/VSP family. Highly expressed in flowers, but also found in leaves, vegetative shoots, petioles, peduncles, and receptacles of floral organs.

May function as somatic storage protein during early seedling development. The sequence is that of Vegetative storage protein 2 (VSP2) from Arabidopsis thaliana (Mouse-ear cress).